The chain runs to 435 residues: Protein GOLM2 (435 aa).

Met1 carries the N-acetylmethionine modification. The Cytoplasmic portion of the chain corresponds to 1–14; sequence MVGFGANRRAGRLP. The helical; Signal-anchor for type II membrane protein transmembrane segment at 15-35 threads the bilayer; it reads SFVLVVLLVVIVVLAFNYWSI. Positions 35 to 194 form a coiled coil; sequence ISSRHVLLQE…DQFLQEQKET (160 aa). The Lumenal portion of the chain corresponds to 36-435; the sequence is SSRHVLLQEE…YGKQRFSDVL (400 aa). Composition is skewed to basic and acidic residues over residues 191-212 and 223-239; these read QKETHKIQSNDGKELGRNDHGA and DANKNEDPSSNHLPHGK. Disordered regions lie at residues 191-239 and 271-435; these read QKET…PHGK and PPVL…SDVL. Ser232 carries the phosphoserine modification. 2 stretches are compositionally biased toward polar residues: residues 282 to 294 and 302 to 320; these read QTISHLPTGQPLS and HLNQNENPSTSKQNPSNPL. Positions 343 to 361 are enriched in basic and acidic residues; the sequence is ATRDRANDFHKLKQSRFFD. Position 365 is a phosphoserine (Ser365). Acidic residues predominate over residues 398 to 417; sequence YNEEEDGDGGEEDVQDDEER. Positions 425–435 are enriched in basic and acidic residues; sequence DYGKQRFSDVL.

Belongs to the GOLM family.

The protein localises to the membrane. The protein is Protein GOLM2 of Mus musculus (Mouse).